A 611-amino-acid chain; its full sequence is tRNA uridine 5-carboxymethylaminomethyl modification enzyme MnmG (611 aa).

14 to 19 (GAGHAG) provides a ligand contact to FAD. Position 274-288 (274-288 (GPRYCPSIEDKIVKF)) interacts with NAD(+).

This sequence belongs to the MnmG family. In terms of assembly, homodimer. Heterotetramer of two MnmE and two MnmG subunits. It depends on FAD as a cofactor.

Its subcellular location is the cytoplasm. NAD-binding protein involved in the addition of a carboxymethylaminomethyl (cmnm) group at the wobble position (U34) of certain tRNAs, forming tRNA-cmnm(5)s(2)U34. In Chlamydia abortus (strain DSM 27085 / S26/3) (Chlamydophila abortus), this protein is tRNA uridine 5-carboxymethylaminomethyl modification enzyme MnmG.